A 62-amino-acid polypeptide reads, in one-letter code: Probable tautomerase SH1546 (62 aa).

Residue Pro-2 is the Proton acceptor; via imino nitrogen of the active site.

Belongs to the 4-oxalocrotonate tautomerase family.

This chain is Probable tautomerase SH1546, found in Staphylococcus haemolyticus (strain JCSC1435).